Here is an 812-residue protein sequence, read N- to C-terminus: Lon protease (812 aa).

In terms of domain architecture, Lon N-terminal spans 22-215 (YAVLPLRDIV…KALSFMEAEI (194 aa)). Position 367–374 (367–374 (GPPGVGKT)) interacts with ATP. Residues 602-783 (EDQVGVVTGL…GEVLKHTLVR (182 aa)) enclose the Lon proteolytic domain. Residues S689 and K732 contribute to the active site. Residues 787 to 812 (PIEWTEQENPTAVPPVEDEAGASLAH) form a disordered region.

The protein belongs to the peptidase S16 family. Homohexamer. Organized in a ring with a central cavity.

It localises to the cytoplasm. The catalysed reaction is Hydrolysis of proteins in presence of ATP.. In terms of biological role, ATP-dependent serine protease that mediates the selective degradation of mutant and abnormal proteins as well as certain short-lived regulatory proteins. Required for cellular homeostasis and for survival from DNA damage and developmental changes induced by stress. Degrades polypeptides processively to yield small peptide fragments that are 5 to 10 amino acids long. Binds to DNA in a double-stranded, site-specific manner. In Brucella suis biovar 1 (strain 1330), this protein is Lon protease.